The primary structure comprises 741 residues: 2-5A-dependent ribonuclease (741 aa).

The disordered stretch occupies residues 1–21 (MESRDHNNPQEGPTSSSGRRA). Positions 9–18 (PQEGPTSSSG) are enriched in polar residues. 9 ANK repeats span residues 24–53 (EDNH…NVNF), 58–87 (GGWT…DPVL), 91–120 (NGAT…DVNE), 124–153 (YGFT…NVNL), 167–197 (GGAT…DVNA), 201–234 (MGRN…DVNV), 238–268 (RGKT…EIND), 272–301 (DGKT…STDC), and 303–329 (DLVM…KEDF). 2-5A binding (P-loop) stretches follow at residues 229–242 (GADV…GKTP) and 253–275 (GLVQ…DGKT). The Protein kinase domain occupies 365–586 (IDEKYKIADT…LSDLLGHPFF (222 aa)). The C6-type; atypical zinc-finger motif lies at 395-444 (CEGSPRAQREVSCLQSSRENSHLVTFYGSESHRGHLFVCVTLCEQTLEAC). In terms of domain architecture, KEN spans 589 to 723 (WESRYRTLRN…KHFPQTHSPN (135 aa)). Lys684 carries the post-translational modification N6-acetyllysine. Residues 715–741 (HFPQTHSPNKPQCDGAGGASGLASPGC) form a disordered region.

The protein belongs to the protein kinase superfamily. Monomer (inactive form) or homodimer. Interacts with ABCE1; this interaction inhibits the RNASEL. It depends on Mn(2+) as a cofactor. Mg(2+) serves as cofactor. Highly expressed in spleen and thymus followed by prostate, testis, uterus, small intestine, colon and peripheral blood leukocytes.

Its subcellular location is the cytoplasm. It localises to the mitochondrion. After binding to 2-5A (5'-phosphorylated 2',5'-linked oligoadenylates) the homodimerization and subsequent activation occurs. Inhibited by RNASEL inhibitor ABCE1/RLI, a cytoplasmic member of the ATP-binding cassette (ABC) transporter family. In terms of biological role, endoribonuclease that functions in the interferon (IFN) antiviral response. In INF treated and virus infected cells, RNASEL probably mediates its antiviral effects through a combination of direct cleavage of single-stranded viral RNAs, inhibition of protein synthesis through the degradation of rRNA, induction of apoptosis, and induction of other antiviral genes. RNASEL mediated apoptosis is the result of a JNK-dependent stress-response pathway leading to cytochrome c release from mitochondria and caspase-dependent apoptosis. Therefore, activation of RNASEL could lead to elimination of virus infected cells under some circumstances. In the crosstalk between autophagy and apoptosis proposed to induce autophagy as an early stress response to small double-stranded RNA and at later stages of prolonged stress to activate caspase-dependent proteolytic cleavage of BECN1 to terminate autophagy and promote apoptosis. Might play a central role in the regulation of mRNA turnover. Cleaves 3' of UpNp dimers, with preference for UU and UA sequences, to sets of discrete products ranging from between 4 and 22 nucleotides in length. This chain is 2-5A-dependent ribonuclease (RNASEL), found in Homo sapiens (Human).